Reading from the N-terminus, the 115-residue chain is Toxin-like structure LSTX-R1 (115 aa).

Positions 1–18 are cleaved as a signal peptide; that stretch reads MKLSLIIIATSLVIAVVA. Residues 19–51 constitute a propeptide that is removed on maturation; sequence FPSKDSAATDFDKTESLENVEERVETALDERPR.

Belongs to the neurotoxin 25 family. F7 subfamily. Post-translationally, contains 4 disulfide bonds. In terms of tissue distribution, expressed by the venom gland.

Its subcellular location is the secreted. The protein is Toxin-like structure LSTX-R1 of Lycosa singoriensis (Wolf spider).